The sequence spans 175 residues: Putative adenylate cyclase MJ0240 (175 aa).

The CYTH domain occupies 1–175 (MIEVEIKVKI…RKSYLELRGL (175 aa)). Tyrosine 37 serves as the catalytic Proton acceptor.

This sequence belongs to the adenylyl cyclase CyaB family.

The protein localises to the cytoplasm. It carries out the reaction ATP = 3',5'-cyclic AMP + diphosphate. Functionally, could catalyze the biosynthesis of cyclic AMP (cAMP) from ATP. This chain is Putative adenylate cyclase MJ0240, found in Methanocaldococcus jannaschii (strain ATCC 43067 / DSM 2661 / JAL-1 / JCM 10045 / NBRC 100440) (Methanococcus jannaschii).